The chain runs to 610 residues: Serine/threonine-protein kinase VRK1 (610 aa).

The Protein kinase domain maps to 32 to 384; the sequence is FIVGKQFATG…PRKRTTRKAV (353 aa). Residues 38–46 and Lys-61 each bind ATP; that span reads FATGGFGRI. The active-site Proton acceptor is the Asp-167. Disordered regions lie at residues 317–476, 498–530, 544–577, and 590–610; these read IQKT…NKVA, ISVASDKSPTTSTPSSSSGLRSKRKSSEDVGEG, KKAKTKSGISSATKASPTELRRVPGVRNFPKGRR, and ERLASRQTKPTFDDSSCSSEV. Residues 352 to 373 are compositionally biased toward basic and acidic residues; sequence AVKEESDNKDNDEVEVKPEKKA. Residues 388–397 show a composition bias toward acidic residues; the sequence is NDSDDNEEQY. A compositionally biased stretch (low complexity) spans 447–458; sequence TTPSSAASTSRS. Residues 465-474 show a composition bias toward polar residues; sequence LTSSTASSNK. Positions 502-517 are enriched in low complexity; it reads SDKSPTTSTPSSSSGL. 2 stretches are compositionally biased toward polar residues: residues 550–559 and 594–610; these read SGISSATKAS and SRQTKPTFDDSSCSSEV.

The protein belongs to the protein kinase superfamily. CK1 Ser/Thr protein kinase family. VRK subfamily. In terms of processing, autophosphorylates in vitro. Present in germ cells at all stages of progression from the mitotic zone to mature oocytes, but not in maturing spermatids (at the protein level). Expressed in the ventral nerve cord and vulva cells.

The protein localises to the nucleus. It is found in the cytoplasm. The protein resides in the cajal body. It catalyses the reaction L-seryl-[protein] + ATP = O-phospho-L-seryl-[protein] + ADP + H(+). The enzyme catalyses L-threonyl-[protein] + ATP = O-phospho-L-threonyl-[protein] + ADP + H(+). Serine/threonine kinase that phosphorylates baf-1, thus regulating the association of baf-1 with chromatin and nuclear membrane proteins during nuclear envelope formation. May act through the egl-17 signaling pathway. Essential in hermaphrodites for formation of the vulva, uterus, and uterine seam cells and for development and maintenance of the somatic gonad and thus the germ line. Acts to prevent cep-1 from triggering an inappropriate cell cycle arrest, thereby promoting germ cell proliferation. Regulates anchor cell polarity and the timing of anchor cell invasion through the basement membranes separating vulval and somatic gonadal cells during the L3 larval stage. The polypeptide is Serine/threonine-protein kinase VRK1 (Caenorhabditis elegans).